The sequence spans 237 residues: Anti-FlhC(2)FlhD(4) factor YdiV (237 aa).

The region spanning 1 to 237 (MIASLDELYH…VSQLIKLVQR (237 aa)) is the EAL domain.

This sequence belongs to the YdiV family. Interacts with FlhD in the FlhC(2)FlhD(4) heterohexamer, inhibiting its ability to activate transcription.

In terms of biological role, acts as an anti-FlhC(2)FlhD(4) factor by binding to FlhD, decreasing its ability to bind DNA, and thus negatively regulates expression of flagellar class II operons, decreasing motility in nutrient-poor medium. Required for resistance to host phagocyte oxidase. The chain is Anti-FlhC(2)FlhD(4) factor YdiV (ydiV) from Salmonella typhi.